We begin with the raw amino-acid sequence, 239 residues long: Norbelladine 4'-O-methyltransferase (239 aa).

Residues Val-55, Glu-77, 79–80 (GV), Ser-85, Asp-103, and Ala-132 contribute to the S-adenosyl-L-methionine site. Asp-155 contacts a divalent metal cation. Residue Asp-157 coordinates S-adenosyl-L-methionine. The a divalent metal cation site is built by Asp-181 and Asn-182.

This sequence belongs to the class I-like SAM-binding methyltransferase superfamily. Cation-dependent O-methyltransferase family. The cofactor is Mg(2+). Highly expressed in bulbs. Detected in leaves and inflorescences.

The enzyme catalyses norbelladine + S-adenosyl-L-methionine = 4'-O-methylnorbelladine + S-adenosyl-L-homocysteine + H(+). It functions in the pathway alkaloid biosynthesis. Its function is as follows. 4'-O-methyltransferase converting norbelladine to 4'-O-methylnorbelladine. 4'-O-methylnorbelladine is a precursor to all Amaryllidaceae alkaloids such as galanthamine, lycorine and haemanthamine, and including haemanthamine- and crinamine-type alkaloids, promising anticancer agents. Can use norbelladine, N-methylnorbelladine and dopamine as substrate, but not caffeic acid, vanillin, 3,4-dihydroxybenzaldehyde and tyramine. The chain is Norbelladine 4'-O-methyltransferase from Narcissus aff. pseudonarcissus MK-2014 (Daffodil).